An 801-amino-acid chain; its full sequence is Mitochondrial intermediate peptidase (801 aa).

The transit peptide at 1–41 directs the protein to the mitochondrion; sequence MKDQLLVPLRRRPWTCQKCLQRLQLPRHQTRRSFETAASPF. H564 is a binding site for Zn(2+). E565 is an active-site residue. Zn(2+) is bound by residues H568 and H571.

Belongs to the peptidase M3 family. Zn(2+) is required as a cofactor.

The protein localises to the mitochondrion matrix. The enzyme catalyses Release of an N-terminal octapeptide as second stage of processing of some proteins imported into the mitochondrion.. Its function is as follows. Cleaves proteins, imported into the mitochondrion, to their mature size. While most mitochondrial precursor proteins are processed to the mature form in one step by mitochondrial processing peptidase (MPP), the sequential cleavage by MIP of an octapeptide after initial processing by MPP is a required step for a subgroup of nuclear-encoded precursor proteins destined for the matrix or the inner membrane. This is Mitochondrial intermediate peptidase (oct1) from Aspergillus fumigatus (strain CBS 144.89 / FGSC A1163 / CEA10) (Neosartorya fumigata).